Consider the following 557-residue polypeptide: Formate--tetrahydrofolate ligase 2 (557 aa).

Position 66 to 73 (66 to 73 (TPAGEGKT)) interacts with ATP.

It belongs to the formate--tetrahydrofolate ligase family.

It carries out the reaction (6S)-5,6,7,8-tetrahydrofolate + formate + ATP = (6R)-10-formyltetrahydrofolate + ADP + phosphate. Its pathway is one-carbon metabolism; tetrahydrofolate interconversion. The polypeptide is Formate--tetrahydrofolate ligase 2 (Streptococcus pyogenes serotype M6 (strain ATCC BAA-946 / MGAS10394)).